Consider the following 1512-residue polypeptide: MSFYKKVTRGLATPLQGSINLFSGSPNVSGDEGTDADNENPEHRTTYHSLSGRVNHDDDDEDVAKLEDIVGFFTGLLNTTTVCAGLGSLNNLKKHYLDEFIKKSALNPLRPQNYGPETSSKLNNNSIEELLNNGDTSLEKVRKMSLYDFDEHTSDSEEEDSADKEEESIAENLKPGKSGKARNHPRDSRTTATLITTQITRTKTATTATPTPTPTSSVDTDVTDVTEPIGKVTTKIPEEQLQGLNPLQKSVVKNLDPHHVREGVLIKVKNSETPLKNDRQELLEKIQLRLKIADKLQRVFDLSDEDTFCGNYSAWLIKDVLLQGHVYLTKDALLYFAFLPKRFSLENSSEVLDEDNSSSIVYSGNLGLKSAKYGEVVLNTVLQHRYWAVLRAETLSIYSSSTNLYFPVLVIDIKKCLYTEIIDKEKLNREAISPVNRGTYSPNGGLSGTATPRASTLENTASELNSMLSGDSYSPTEDNVETTASTVWFKLVTKKKTYKFSCDSSFSARQWCNNITKLIFQHNNANSNGEVLIKIPISKIAEYNKRALFSEEEEEDRTLDVTMNDIPLNVTIKYLGDNDNERKRDKLKRKYKGEEPTIEEVHFLFPKSGVEFFETFDKLVNPVVSDNDNQSSKSSITSTNFSEKAISTLSKSPNHLVQTVLDFNKPVDDDISAFKKFGTTITSPTRIFKATITSPEMTSIDETSLRDSFDSDRLHLPRDMSERALKNLEVSFVTSLKKLEDASKRYEKPHMEHSQTNLASILSDPSEVKKESKTAISKSIKALYSVGTHWSATPNHYFELGKYYVNKVQDRDSSQRNFQSHFSTNSKLLASYYGHLLRTVPVYGKIYVSETDVCFRSLLPGVSTKMVLPMTDIEEVRASRGSRLTYHGLRLIVRGSEELDLEFGSSKSRDDFQKVVLSVLERLHSKEGFRPEPYQWGSNFEVELYKTRMEYSDSENREIQQYDNSIDIKFAEKKIEMARVRMFEDRLMAASGLDVPIILEDSPFFKTELRPSTSYNITLLTIGSRGDVQPYIALGKGLVKEGHNVTIATHAEFGDWIKTFGLGFKEIAGDPAELMSFMVTHNSMSVGFLKNAQQKFRSWISKLLTTSWEACQGSDILIESPSAMSGIHIAEALGIPYFRAFTMPWTRTRAYPHAFFVPEQKKGGSYNYLTHVLFENIFWKGISGQVNKWRVEELDLPKTNLYRLQQTRVPFLYNVSPAILPPSVDFPDWIKVTGYWFLDEGSGDYKPPEELVQFMKKASRDKKKIVYIGFGSIVVKDAKSLTKAVVSAVRRADVRCILNKGWSDRLDNKDKNEIEIELPPEIYNSGTIPHDWLFPRIDAAVHHGGSGTTGATMRAGIPTIIKPFFGDQFFYATRIEDLGAGIALKKLTAKTLGDALVKATHDLKIIDKAKRVSQQIKHEHGVLSAIESIYSELEYSRNLILIKDIHNQNYKRHHPVPSGVQTPAYDTDSDDYDDDEDDDESDKDDEEEEEENSYDGYDGNGVNNSPSQNSSN.

Disordered stretches follow at residues 22 to 50 (FSGS…YHSL) and 150 to 222 (DEHT…DTDV). A compositionally biased stretch (acidic residues) spans 156–169 (SEEEDSADKEEESI). Residues 190 to 222 (TTATLITTQITRTKTATTATPTPTPTSSVDTDV) are compositionally biased toward low complexity. The GRAM 1 domain occupies 296–331 (LQRVFDLSDEDTFCGNYSAWLIKDVLLQGHVYLTKD). The region spanning 359-520 (SIVYSGNLGL…WCNNITKLIF (162 aa)) is the PH domain. The region spanning 816–880 (RNFQSHFSTN…TDIEEVRASR (65 aa)) is the GRAM 2 domain. UDP-alpha-D-glucose is bound by residues S1024, R1025, D1027, N1299, I1328, H1330, H1343, S1346, G1347, T1348, D1367, and Q1368. Positions 1450-1512 (YKRHHPVPSG…NNSPSQNSSN (63 aa)) are disordered. The segment covering 1467 to 1493 (TDSDDYDDDEDDDESDKDDEEEEEENS) has biased composition (acidic residues). The span at 1501–1512 (GVNNSPSQNSSN) shows a compositional bias: polar residues.

Belongs to the glycosyltransferase 28 family.

The protein resides in the cytoplasm. Its subcellular location is the membrane. The catalysed reaction is a sterol + UDP-alpha-D-glucose = a sterol 3-beta-D-glucoside + UDP + H(+). It catalyses the reaction ergosterol + UDP-alpha-D-glucose = ergosteryl 3-beta-D-glucoside + UDP + H(+). Functionally, sterol glycosyltransferase responsible for the glycosylation of ergosterol to form ergosterol-glucoside. In Candida albicans (strain SC5314 / ATCC MYA-2876) (Yeast), this protein is Sterol 3-beta-glucosyltransferase.